A 139-amino-acid polypeptide reads, in one-letter code: Nucleoside diphosphate kinase (139 aa).

ATP is bound by residues Lys11, Phe59, Arg87, Thr93, Arg104, and Asn114. Catalysis depends on His117, which acts as the Pros-phosphohistidine intermediate.

It belongs to the NDK family. As to quaternary structure, homotetramer. Mg(2+) is required as a cofactor.

It localises to the cytoplasm. It carries out the reaction a 2'-deoxyribonucleoside 5'-diphosphate + ATP = a 2'-deoxyribonucleoside 5'-triphosphate + ADP. The catalysed reaction is a ribonucleoside 5'-diphosphate + ATP = a ribonucleoside 5'-triphosphate + ADP. In terms of biological role, major role in the synthesis of nucleoside triphosphates other than ATP. The ATP gamma phosphate is transferred to the NDP beta phosphate via a ping-pong mechanism, using a phosphorylated active-site intermediate. The chain is Nucleoside diphosphate kinase from Wolbachia pipientis wMel.